The primary structure comprises 570 residues: Sulfite reductase [NADPH] hemoprotein beta-component (570 aa).

Cys434, Cys440, Cys479, and Cys483 together coordinate [4Fe-4S] cluster. Cys483 contacts siroheme.

The protein belongs to the nitrite and sulfite reductase 4Fe-4S domain family. In terms of assembly, alpha(8)-beta(8). The alpha component is a flavoprotein, the beta component is a hemoprotein. It depends on siroheme as a cofactor. Requires [4Fe-4S] cluster as cofactor.

The catalysed reaction is hydrogen sulfide + 3 NADP(+) + 3 H2O = sulfite + 3 NADPH + 4 H(+). Its pathway is sulfur metabolism; hydrogen sulfide biosynthesis; hydrogen sulfide from sulfite (NADPH route): step 1/1. Component of the sulfite reductase complex that catalyzes the 6-electron reduction of sulfite to sulfide. This is one of several activities required for the biosynthesis of L-cysteine from sulfate. The polypeptide is Sulfite reductase [NADPH] hemoprotein beta-component (Salmonella schwarzengrund (strain CVM19633)).